The sequence spans 126 residues: Methylglyoxal synthase (126 aa).

The MGS-like domain occupies 1–126 (MAGGKCIALI…AERLIKTLNH (126 aa)). Substrate is bound by residues histidine 12, lysine 16, 38-41 (TGTT), and 59-60 (SG). Residue aspartate 65 is the Proton donor/acceptor of the active site. Histidine 92 is a binding site for substrate.

Belongs to the methylglyoxal synthase family.

The enzyme catalyses dihydroxyacetone phosphate = methylglyoxal + phosphate. Functionally, catalyzes the formation of methylglyoxal from dihydroxyacetone phosphate. This chain is Methylglyoxal synthase, found in Rhizobium rhizogenes (strain K84 / ATCC BAA-868) (Agrobacterium radiobacter).